A 469-amino-acid polypeptide reads, in one-letter code: Cysteine--tRNA ligase (469 aa).

A Zn(2+)-binding site is contributed by Cys33. Positions 35 to 45 (ATVQGLPHIGH) match the 'HIGH' region motif. Residues Cys211, His236, and Glu240 each coordinate Zn(2+). The 'KMSKS' region signature appears at 267-271 (KMSKS). ATP is bound at residue Lys270.

Belongs to the class-I aminoacyl-tRNA synthetase family. Monomer. Zn(2+) is required as a cofactor.

The protein resides in the cytoplasm. It catalyses the reaction tRNA(Cys) + L-cysteine + ATP = L-cysteinyl-tRNA(Cys) + AMP + diphosphate. In Mycobacterium tuberculosis (strain CDC 1551 / Oshkosh), this protein is Cysteine--tRNA ligase (cysS).